A 352-amino-acid chain; its full sequence is Protein RecA (352 aa).

66–73 provides a ligand contact to ATP; that stretch reads GPESSGKT.

Belongs to the RecA family.

It is found in the cytoplasm. Can catalyze the hydrolysis of ATP in the presence of single-stranded DNA, the ATP-dependent uptake of single-stranded DNA by duplex DNA, and the ATP-dependent hybridization of homologous single-stranded DNAs. It interacts with LexA causing its activation and leading to its autocatalytic cleavage. The protein is Protein RecA of Psychrobacter arcticus (strain DSM 17307 / VKM B-2377 / 273-4).